The sequence spans 215 residues: Glycerol-3-phosphate acyltransferase (215 aa).

6 helical membrane passes run 3-23 (LILLILTAYLLGSIPTGLWIG), 42-61 (TNTFRILGLKAGAATLLIDI), 68-90 (TLLPVLVGASNISPITIGFFAVL), 110-130 (AGVLLGFAPLYLLFLAAVFVL), 134-154 (LFSMISLASLTASVVAVISVL), and 162-182 (LLPSYDWLLTITIVVLAAIII).

The protein belongs to the PlsY family. As to quaternary structure, probably interacts with PlsX.

The protein resides in the cell membrane. It catalyses the reaction an acyl phosphate + sn-glycerol 3-phosphate = a 1-acyl-sn-glycero-3-phosphate + phosphate. It participates in lipid metabolism; phospholipid metabolism. Functionally, catalyzes the transfer of an acyl group from acyl-phosphate (acyl-PO(4)) to glycerol-3-phosphate (G3P) to form lysophosphatidic acid (LPA). This enzyme utilizes acyl-phosphate as fatty acyl donor, but not acyl-CoA or acyl-ACP. This Streptococcus equi subsp. equi (strain 4047) protein is Glycerol-3-phosphate acyltransferase.